We begin with the raw amino-acid sequence, 108 residues long: MPRWGRGRRRKMRMIEFIPYARHFYPALPRFGPPKPPIIMTYEEFEALRLVDYEGLTQEEAGKRMGVSRGTIWRALTSARKKVAQMLVEGRELIILPQGNEVIKSDEE.

The protein belongs to the UPF0251 family.

This is UPF0251 protein PF0620 from Pyrococcus furiosus (strain ATCC 43587 / DSM 3638 / JCM 8422 / Vc1).